We begin with the raw amino-acid sequence, 331 residues long: Dof zinc finger protein DOF1.1 (331 aa).

The Dof-type zinc-finger motif lies at 77–131; that stretch reads LKCPRCDSSNTKFCYYNNYNLTQPRHFCKGCRRYWTQGGALRNVPVGGGCRRNNK. The Zn(2+) site is built by Cys-79, Cys-82, Cys-104, and Cys-107. Disordered stretches follow at residues 121–166 and 291–331; these read PVGG…TNHQ and EEQP…NDLL. Over residues 135-160 the composition is skewed to low complexity; it reads NGNLKSSSSSSKQSSSVNAQSPSSGQ. Over residues 305–316 the composition is skewed to polar residues; it reads GLTSPGNQTNQY.

In terms of assembly, interacts with OBF4. As to expression, expressed in the vasculature (mainly in the phloem and associated cell files) of cotyledons, leaves, roots, flower stalks and petals. The PEAR proteins (e.g. DOF2.4, DOF5.1, DOF3.2, DOF1.1, DOF5.6 and DOF5.3) form a short-range concentration gradient that peaks at protophloem sieve elements (PSE).

It localises to the nucleus. Its function is as follows. Transcription factor that binds specifically to a 5'-AA[AG]G-3' consensus core sequence. Enhances the DNA binding of OBF transcription factors to OCS elements. Involved in the regulation of root development. The PEAR proteins (e.g. DOF2.4, DOF5.1, DOF3.2, DOF1.1, DOF5.6 and DOF5.3) activate gene expression that promotes radial growth of protophloem sieve elements. Element of a regulatory network controlling indole glucosinolates (IGS) biosynthesis, probably by inducing the expression of accurate genes (e.g. CYP83B1). Promotes apical dominance. The polypeptide is Dof zinc finger protein DOF1.1 (Arabidopsis thaliana (Mouse-ear cress)).